Reading from the N-terminus, the 337-residue chain is Holliday junction branch migration complex subunit RuvB (337 aa).

Residues 1–20 (MQTRFVSPVNHDEEQDEPSV) are disordered. The tract at residues 1–181 (MQTRFVSPVN…FGIILRLDLY (181 aa)) is large ATPase domain (RuvB-L). Residues R21, G62, K65, T66, T67, 128–130 (EDY), R171, Y181, and R218 each bind ATP. T66 contacts Mg(2+). Residues 182–252 (DPSELTVIVT…IANTALFALG (71 aa)) are small ATPAse domain (RuvB-S). The tract at residues 255–337 (QKGLDILDRR…SHTRDLTSFL (83 aa)) is head domain (RuvB-H). The DNA site is built by R310 and R315.

This sequence belongs to the RuvB family. In terms of assembly, homohexamer. Forms an RuvA(8)-RuvB(12)-Holliday junction (HJ) complex. HJ DNA is sandwiched between 2 RuvA tetramers; dsDNA enters through RuvA and exits via RuvB. An RuvB hexamer assembles on each DNA strand where it exits the tetramer. Each RuvB hexamer is contacted by two RuvA subunits (via domain III) on 2 adjacent RuvB subunits; this complex drives branch migration. In the full resolvosome a probable DNA-RuvA(4)-RuvB(12)-RuvC(2) complex forms which resolves the HJ.

It is found in the cytoplasm. It carries out the reaction ATP + H2O = ADP + phosphate + H(+). In terms of biological role, the RuvA-RuvB-RuvC complex processes Holliday junction (HJ) DNA during genetic recombination and DNA repair, while the RuvA-RuvB complex plays an important role in the rescue of blocked DNA replication forks via replication fork reversal (RFR). RuvA specifically binds to HJ cruciform DNA, conferring on it an open structure. The RuvB hexamer acts as an ATP-dependent pump, pulling dsDNA into and through the RuvAB complex. RuvB forms 2 homohexamers on either side of HJ DNA bound by 1 or 2 RuvA tetramers; 4 subunits per hexamer contact DNA at a time. Coordinated motions by a converter formed by DNA-disengaged RuvB subunits stimulates ATP hydrolysis and nucleotide exchange. Immobilization of the converter enables RuvB to convert the ATP-contained energy into a lever motion, pulling 2 nucleotides of DNA out of the RuvA tetramer per ATP hydrolyzed, thus driving DNA branch migration. The RuvB motors rotate together with the DNA substrate, which together with the progressing nucleotide cycle form the mechanistic basis for DNA recombination by continuous HJ branch migration. Branch migration allows RuvC to scan DNA until it finds its consensus sequence, where it cleaves and resolves cruciform DNA. This is Holliday junction branch migration complex subunit RuvB from Methanospirillum hungatei JF-1 (strain ATCC 27890 / DSM 864 / NBRC 100397 / JF-1).